Here is a 438-residue protein sequence, read N- to C-terminus: Protein c-ets-1-A (438 aa).

Residues 49-134 (ATFSRFTKEQ…EHLEILQKDS (86 aa)) enclose the PNT domain. The interval 128–240 (EILQKDSKQY…DNMCLGRISR (113 aa)) is activation domain; required for transcription activation. Residues 301 to 309 (FKDYVRDRA) form a helix HI-1 region. Residues 320-327 (AAALAGYT) are helix HI-2. A DNA-binding region (ETS) is located at residues 332 to 412 (IQLWQFLLEL…AGKRYVYRFV (81 aa)). The tract at residues 415–419 (LQSLL) is helix H4. Residues 423 to 429 (PEELHAM) are helix H5.

The protein belongs to the ETS family. Binds DNA as a homodimer; homodimerization is required for transcription activation.

It localises to the nucleus. The protein localises to the cytoplasm. Its activity is regulated as follows. Autoinhibited by a module composed of four alpha helices (HI-1, HI-2, H4, and H5) that flank the DNA-binding ETS domain, reducing the affinity for DNA. Its function is as follows. Transcription factor. Directly controls the expression of cytokine and chemokine genes in a wide variety of different cellular contexts. In Xenopus laevis (African clawed frog), this protein is Protein c-ets-1-A (ets1-a).